We begin with the raw amino-acid sequence, 194 residues long: Cation channel sperm-associated auxiliary subunit zeta (194 aa).

Component of the CatSper complex or CatSpermasome composed of the core pore-forming members CATSPER1, CATSPER2, CATSPER3 and CATSPER4 as well as auxiliary members CATSPERB, CATSPERG2, CATSPERD, CATSPERE, CATSPERZ, C2CD6/CATSPERT, SLCO6C1, TMEM249, TMEM262 and EFCAB9. HSPA1 may be an additional auxiliary complex member. The core complex members CATSPER1, CATSPER2, CATSPER3 and CATSPER4 form a heterotetrameric channel. The auxiliary CATSPERB, CATSPERG2, CATSPERD and CATSPERE subunits form a pavilion-like structure over the pore which stabilizes the complex through interactions with CATSPER4, CATSPER3, CATSPER1 and CATSPER2 respectively. SLCO6C1 interacts with CATSPERE and TMEM262/CATSPERH interacts with CATSPERB, further stabilizing the complex. C2CD6/CATSPERT interacts at least with CATSPERD and is required for targeting the CatSper complex in the flagellar membrane. Interacts with EFCAB9; the interaction is direct, Ca(2+)-dependent and connects EFCAB9 with the CatSper complex. Dissociates from EFCAB9 at elevated pH. In terms of tissue distribution, testis-specific. Expressed in adult but not in fetal testis. Not expressed in ovary. Within testis, expression is restricted to spermatids.

Its subcellular location is the cell projection. It localises to the cilium. The protein localises to the flagellum membrane. Its function is as follows. Auxiliary component of the CatSper complex, a complex involved in sperm cell hyperactivation. Sperm cell hyperactivation is needed for sperm motility which is essential late in the preparation of sperm for fertilization. Required for a distribution of the CatSper complex in linear quadrilateral nanodomains along the flagellum, maximizing fertilization inside the mammalian female reproductive tract. Together with EFCAB9, associates with the CatSper channel pore and is required for the two-row structure of each single CatSper channel. This is Cation channel sperm-associated auxiliary subunit zeta from Mus musculus (Mouse).